A 380-amino-acid polypeptide reads, in one-letter code: Adaptive-response sensory kinase SasA (380 aa).

Residues 20-101 (LLFVANRPGD…QKVDYWWPRW (82 aa)) form a kaiB-like domain, interacts with KaiC region. The Histidine kinase domain maps to 157–380 (LLAHELRNPL…CFHFTLPVYS (224 aa)). Residue histidine 160 is modified to Phosphohistidine; by autocatalysis.

In terms of assembly, homotrimer with a small amount of possible homohexamer; a protein fragment of 109-380 is also a homotrimer. Interacts with KaiC, probably as 1 SasA trimer:1 KaiC homohexamer; unphosphorylated SasA has the highest affinity. Homodimer. Binds to the B-loop in the CI domain of KaiC; SasA and KaiB(fs) compete to bind to the CI domain. Binds preferentially to doubly phosphorylated KaiC. Post-translationally, autophosphorylates, probably on His-160.

It carries out the reaction ATP + protein L-histidine = ADP + protein N-phospho-L-histidine.. Its function is as follows. Member of the two-component regulatory system SasA/RpaA involved in genome-wide circadian gene expression. One of several clock output pathways. Participates in the Kai clock protein complex, the main circadian regulator in cyanobacteria, via its interaction with KaiC. KaiC enhances the autophosphorylation activity of SasA, which then transfers its phosphate group to RpaA to activate it. In addition to its output function, recruits fold-shifted KaiB (KaiB(fs)) to KaiC to cooperatively form the KaiB(6):KaiC(6) complex (independent of SasA kinase activity). Required for robustness of the circadian rhythm of gene expression and is involved in clock output, also required for adaptation to light/dark cycles. In Thermosynechococcus vestitus (strain NIES-2133 / IAM M-273 / BP-1), this protein is Adaptive-response sensory kinase SasA.